The sequence spans 726 residues: uncharacterized protein (726 aa).

Residues 10 to 135 (MRISWVVAFI…LLDFVETHLN (126 aa)) enclose the Thioredoxin domain. Disordered stretches follow at residues 133 to 153 (HLNP…TDED) and 227 to 280 (VTSV…NPTG). Residues 138-153 (TDPDIPSDEDVLTDED) show a composition bias toward acidic residues. The helical transmembrane segment at 675 to 695 (IRVLYMVLGIVTVGILVWYFS) threads the bilayer. Residue Ser708 is modified to Phosphoserine.

It is found in the membrane. This is an uncharacterized protein from Schizosaccharomyces pombe (strain 972 / ATCC 24843) (Fission yeast).